The following is a 283-amino-acid chain: Elongation factor Ts (283 aa).

The involved in Mg(2+) ion dislocation from EF-Tu stretch occupies residues 80-83 (TDFV).

It belongs to the EF-Ts family.

The protein localises to the cytoplasm. Functionally, associates with the EF-Tu.GDP complex and induces the exchange of GDP to GTP. It remains bound to the aminoacyl-tRNA.EF-Tu.GTP complex up to the GTP hydrolysis stage on the ribosome. This is Elongation factor Ts from Klebsiella pneumoniae (strain 342).